The following is an 87-amino-acid chain: UPF0250 protein CKO_02527 (87 aa).

The protein belongs to the UPF0250 family.

The chain is UPF0250 protein CKO_02527 from Citrobacter koseri (strain ATCC BAA-895 / CDC 4225-83 / SGSC4696).